The following is a 94-amino-acid chain: Co-chaperonin GroES (94 aa).

This sequence belongs to the GroES chaperonin family. As to quaternary structure, heptamer of 7 subunits arranged in a ring. Interacts with the chaperonin GroEL.

The protein resides in the cytoplasm. In terms of biological role, together with the chaperonin GroEL, plays an essential role in assisting protein folding. The GroEL-GroES system forms a nano-cage that allows encapsulation of the non-native substrate proteins and provides a physical environment optimized to promote and accelerate protein folding. GroES binds to the apical surface of the GroEL ring, thereby capping the opening of the GroEL channel. The protein is Co-chaperonin GroES of Exiguobacterium sibiricum (strain DSM 17290 / CCUG 55495 / CIP 109462 / JCM 13490 / 255-15).